The primary structure comprises 430 residues: Enolase (430 aa).

Position 163 (Gln163) interacts with (2R)-2-phosphoglycerate. Glu205 (proton donor) is an active-site residue. The Mg(2+) site is built by Asp242, Glu287, and Asp314. (2R)-2-phosphoglycerate-binding residues include Lys339, Arg368, Ser369, and Lys390. The active-site Proton acceptor is Lys339.

This sequence belongs to the enolase family. Requires Mg(2+) as cofactor.

Its subcellular location is the cytoplasm. It localises to the secreted. It is found in the cell surface. The enzyme catalyses (2R)-2-phosphoglycerate = phosphoenolpyruvate + H2O. Its pathway is carbohydrate degradation; glycolysis; pyruvate from D-glyceraldehyde 3-phosphate: step 4/5. Catalyzes the reversible conversion of 2-phosphoglycerate (2-PG) into phosphoenolpyruvate (PEP). It is essential for the degradation of carbohydrates via glycolysis. The protein is Enolase of Clostridioides difficile (strain 630) (Peptoclostridium difficile).